The primary structure comprises 468 residues: 3-isopropylmalate dehydratase large subunit (468 aa).

3 residues coordinate [4Fe-4S] cluster: Cys-347, Cys-407, and Cys-410.

It belongs to the aconitase/IPM isomerase family. LeuC type 1 subfamily. Heterodimer of LeuC and LeuD. It depends on [4Fe-4S] cluster as a cofactor.

It catalyses the reaction (2R,3S)-3-isopropylmalate = (2S)-2-isopropylmalate. It participates in amino-acid biosynthesis; L-leucine biosynthesis; L-leucine from 3-methyl-2-oxobutanoate: step 2/4. Functionally, catalyzes the isomerization between 2-isopropylmalate and 3-isopropylmalate, via the formation of 2-isopropylmaleate. This chain is 3-isopropylmalate dehydratase large subunit, found in Glaesserella parasuis serovar 5 (strain SH0165) (Haemophilus parasuis).